Here is a 122-residue protein sequence, read N- to C-terminus: Large ribosomal subunit protein uL14 (122 aa).

It belongs to the universal ribosomal protein uL14 family. Part of the 50S ribosomal subunit. Forms a cluster with proteins L3 and L19. In the 70S ribosome, L14 and L19 interact and together make contacts with the 16S rRNA in bridges B5 and B8.

Binds to 23S rRNA. Forms part of two intersubunit bridges in the 70S ribosome. The polypeptide is Large ribosomal subunit protein uL14 (Polynucleobacter necessarius subsp. necessarius (strain STIR1)).